Reading from the N-terminus, the 394-residue chain is Acetate kinase (394 aa).

A Mg(2+)-binding site is contributed by Asn-10. Residue Lys-17 coordinates ATP. Arg-87 is a substrate binding site. The active-site Proton donor/acceptor is the Asp-144. ATP is bound by residues 204-208 (HLGNG), 279-281 (DMR), and 327-331 (GIGEN). Glu-381 contributes to the Mg(2+) binding site.

Belongs to the acetokinase family. In terms of assembly, homodimer. The cofactor is Mg(2+). Mn(2+) is required as a cofactor.

The protein localises to the cytoplasm. The enzyme catalyses acetate + ATP = acetyl phosphate + ADP. It participates in metabolic intermediate biosynthesis; acetyl-CoA biosynthesis; acetyl-CoA from acetate: step 1/2. Catalyzes the formation of acetyl phosphate from acetate and ATP. Can also catalyze the reverse reaction. This chain is Acetate kinase, found in Ectopseudomonas mendocina (strain ymp) (Pseudomonas mendocina).